The sequence spans 410 residues: Multifunctional CCA protein (410 aa).

ATP-binding residues include Gly8 and Arg11. Gly8 and Arg11 together coordinate CTP. The Mg(2+) site is built by Glu21 and Asp23. The ATP site is built by Arg91, Arg137, and Arg140. CTP contacts are provided by Arg91, Arg137, and Arg140. Positions 228–329 constitute an HD domain; sequence TGIHVMMALR…LKLFDRLDVW (102 aa).

It belongs to the tRNA nucleotidyltransferase/poly(A) polymerase family. Bacterial CCA-adding enzyme type 1 subfamily. In terms of assembly, monomer. Can also form homodimers and oligomers. Mg(2+) serves as cofactor. Requires Ni(2+) as cofactor.

The catalysed reaction is a tRNA precursor + 2 CTP + ATP = a tRNA with a 3' CCA end + 3 diphosphate. It catalyses the reaction a tRNA with a 3' CCA end + 2 CTP + ATP = a tRNA with a 3' CCACCA end + 3 diphosphate. Functionally, catalyzes the addition and repair of the essential 3'-terminal CCA sequence in tRNAs without using a nucleic acid template. Adds these three nucleotides in the order of C, C, and A to the tRNA nucleotide-73, using CTP and ATP as substrates and producing inorganic pyrophosphate. tRNA 3'-terminal CCA addition is required both for tRNA processing and repair. Also involved in tRNA surveillance by mediating tandem CCA addition to generate a CCACCA at the 3' terminus of unstable tRNAs. While stable tRNAs receive only 3'-terminal CCA, unstable tRNAs are marked with CCACCA and rapidly degraded. In Tolumonas auensis (strain DSM 9187 / NBRC 110442 / TA 4), this protein is Multifunctional CCA protein.